A 416-amino-acid polypeptide reads, in one-letter code: Phakinin (416 aa).

Residues 1-48 (MSERRVAMDLPSGSNASMPLQRHRVSSLRGTRSPSSLDSPPASRTSAV) form a disordered region. Position 2 is an N-acetylserine (serine 2). Positions 2–115 (SERRVAMDLP…HATAEDLGGC (114 aa)) are head. Serine 27, serine 33, serine 36, and serine 91 each carry phosphoserine. The span at 28–48 (LRGTRSPSSLDSPPASRTSAV) shows a compositional bias: polar residues. One can recognise an IF rod domain in the interval 105–416 (NHATAEDLGG…HALLDREESN (312 aa)). Coiled-coil stretches lie at residues 199–240 (FRKA…SLSR) and 314–391 (LAAA…ERAH). Positions 397-416 (GQLQKDVASYHALLDREESN) are tail.

It belongs to the intermediate filament family. As to quaternary structure, part of a complex required for lens intermediate filament formation composed of BFSP1, BFSP2, and CRYAA. Found in a complex composed of PPL (via C-terminal linker domain), BFSP1 and BFSP2 in the retinal lens. Within the complex interacts with PPL (via C-terminal linker domain) and with BFSP1. Identified in a complex that contains VIM, EZR, AHNAK, BFSP1, BFSP2, ANK2, PLEC, PRX and spectrin. Interacts with LGSN. Interacts with VIM. As to expression, expressed in the deep and shallow cortices of the retina lens (at protein level).

Its subcellular location is the cell membrane. It is found in the cytoplasm. The protein resides in the cytoskeleton. It localises to the cell cortex. Required for the correct formation of lens intermediate filaments as part of a complex composed of BFSP1, BFSP2 and CRYAA. Plays a role in maintenance of retinal lens optical clarity. This chain is Phakinin, found in Rattus norvegicus (Rat).